A 298-amino-acid chain; its full sequence is MDKNIIIGAMTALITPFKNGKVDEQSYARLIKRQIENGIDAVVPVGTTGESATLTHEEHRTCIEIAVETCKGTKVKVLAGAGSNATHEAVGLAKFAKEHGADGILSVAPYYNKPTQQGLYEHYKAIAQSVDIPVLLYNVPGRTGCEISTDTIIKLFRDCENIYGVKEASGNIDKCVDLLAHEPRMMLISGEDAINYPILSNGGKGVISVTSNLLPDMISALTHFALDENYKEAKKINDELYNINKILFCESNPIPIKTAMYLAGLIESLEFRLPLCSPSKENFAKIEEVMKKYKIKGF.

Thr48 is a binding site for pyruvate. The Proton donor/acceptor role is filled by Tyr137. Lys166 serves as the catalytic Schiff-base intermediate with substrate. Ile207 is a binding site for pyruvate.

It belongs to the DapA family. In terms of assembly, homotetramer; dimer of dimers.

The protein resides in the cytoplasm. It catalyses the reaction L-aspartate 4-semialdehyde + pyruvate = (2S,4S)-4-hydroxy-2,3,4,5-tetrahydrodipicolinate + H2O + H(+). The protein operates within amino-acid biosynthesis; L-lysine biosynthesis via DAP pathway; (S)-tetrahydrodipicolinate from L-aspartate: step 3/4. Its function is as follows. Catalyzes the condensation of (S)-aspartate-beta-semialdehyde [(S)-ASA] and pyruvate to 4-hydroxy-tetrahydrodipicolinate (HTPA). The chain is 4-hydroxy-tetrahydrodipicolinate synthase from Campylobacter jejuni subsp. jejuni serotype O:2 (strain ATCC 700819 / NCTC 11168).